The chain runs to 543 residues: Keratin, type II cytoskeletal 75 (543 aa).

Residues 1–16 show a composition bias toward polar residues; the sequence is MSRQSTITFQTSSRRG. Residues 1–48 are disordered; the sequence is MSRQSTITFQTSSRRGFSTASATTPATSRSRFSSASVTHSPAGSGGLG. The tract at residues 1-144 is head; it reads MSRQSTITFQ…DPNIQRVRKE (144 aa). A compositionally biased stretch (low complexity) spans 17–36; that stretch reads FSTASATTPATSRSRFSSAS. The interval 145–180 is coil 1A; that stretch reads EREQIKTLNNKFASFIDKVRFLEQQNKVLETKWSLL. The IF rod domain occupies 145-458; it reads EREQIKTLNN…KLLEGEECRL (314 aa). Positions 181–199 are linker 1; the sequence is QEQGTRTVRQSLEPFFEAY. Positions 200-292 are coil 1B; it reads ITDLRRQLDS…LFEAELCQMQ (93 aa). Residues 293 to 315 are linker 12; that stretch reads TRVSDTSVVLSMDNNRSLDLDSI. The interval 316 to 454 is coil 2; the sequence is IAEVKAQYEE…ATYRKLLEGE (139 aa). Residues 455-543 are tail; it reads ECRLSGEGVS…TSSSRKSYKH (89 aa). The disordered stretch occupies residues 511–543; that stretch reads SSFSNSSSRGLGGSGSSFKFVSTTSSSRKSYKH. The segment covering 526 to 543 has biased composition (low complexity); sequence SSFKFVSTTSSSRKSYKH.

Belongs to the intermediate filament family. In terms of assembly, heterodimer of a type I and a type II keratin. May associate with KRT17.

Its function is as follows. Plays a central role in hair and nail formation. Essential component of keratin intermediate filaments in the companion layer of the hair follicle. This chain is Keratin, type II cytoskeletal 75 (KRT75), found in Bos taurus (Bovine).